Consider the following 398-residue polypeptide: tRNA N6-adenosine threonylcarbamoyltransferase (398 aa).

The a divalent metal cation site is built by histidine 162, histidine 166, and tyrosine 183. Substrate contacts are provided by residues 183-187, aspartate 215, glycine 230, glutamate 234, and asparagine 329; that span reads YVSGG. Aspartate 357 is a binding site for a divalent metal cation.

It belongs to the KAE1 / TsaD family. As to quaternary structure, component of the EKC/KEOPS complex composed of at least BUD32, CGI121, GON7, KAE1 and PCC1; the whole complex dimerizes. It depends on a divalent metal cation as a cofactor.

It localises to the cytoplasm. It is found in the nucleus. It catalyses the reaction L-threonylcarbamoyladenylate + adenosine(37) in tRNA = N(6)-L-threonylcarbamoyladenosine(37) in tRNA + AMP + H(+). Its function is as follows. Component of the EKC/KEOPS complex that is required for the formation of a threonylcarbamoyl group on adenosine at position 37 (t(6)A37) in tRNAs that read codons beginning with adenine. The complex is probably involved in the transfer of the threonylcarbamoyl moiety of threonylcarbamoyl-AMP (TC-AMP) to the N6 group of A37. KAE1 likely plays a direct catalytic role in this reaction, but requires other protein(s) of the complex to fulfill this activity. The EKC/KEOPS complex also promotes both telomere uncapping and telomere elongation. The complex is required for efficient recruitment of transcriptional coactivators. The chain is tRNA N6-adenosine threonylcarbamoyltransferase from Cryptococcus neoformans var. neoformans serotype D (strain B-3501A) (Filobasidiella neoformans).